The following is a 445-amino-acid chain: N-succinylarginine dihydrolase (445 aa).

Substrate is bound by residues 19–28, Asn110, and 137–138; these read AGLSFGNVAS and HR. Residue Glu174 is part of the active site. Arg214 is a binding site for substrate. His250 is a catalytic residue. Positions 252 and 363 each coordinate substrate. Residue Cys369 is the Nucleophile of the active site.

It belongs to the succinylarginine dihydrolase family. As to quaternary structure, homodimer.

It catalyses the reaction N(2)-succinyl-L-arginine + 2 H2O + 2 H(+) = N(2)-succinyl-L-ornithine + 2 NH4(+) + CO2. The protein operates within amino-acid degradation; L-arginine degradation via AST pathway; L-glutamate and succinate from L-arginine: step 2/5. Its function is as follows. Catalyzes the hydrolysis of N(2)-succinylarginine into N(2)-succinylornithine, ammonia and CO(2). In Shewanella halifaxensis (strain HAW-EB4), this protein is N-succinylarginine dihydrolase.